Reading from the N-terminus, the 193-residue chain is dCTP deaminase (193 aa).

Residues 110–115 (RSSLAR), aspartate 128, 136–138 (VLE), tyrosine 171, lysine 178, and glutamine 182 each bind dCTP. Glutamate 138 functions as the Proton donor/acceptor in the catalytic mechanism. Residues 170–181 (PYNRRQDAKYRD) are compositionally biased toward basic and acidic residues. The tract at residues 170–193 (PYNRRQDAKYRDQQGAVASRIDKD) is disordered.

It belongs to the dCTP deaminase family. In terms of assembly, homotrimer.

It catalyses the reaction dCTP + H2O + H(+) = dUTP + NH4(+). It functions in the pathway pyrimidine metabolism; dUMP biosynthesis; dUMP from dCTP (dUTP route): step 1/2. Functionally, catalyzes the deamination of dCTP to dUTP. This Enterobacter sp. (strain 638) protein is dCTP deaminase.